Here is a 500-residue protein sequence, read N- to C-terminus: Probable transcription factor FPSE_09189 (500 aa).

Disordered regions lie at residues methionine 161–alanine 197 and isoleucine 457–glutamate 500. Positions threonine 459–alanine 474 are enriched in basic and acidic residues. Polar residues predominate over residues methionine 475 to serine 484.

It is found in the nucleus. Its function is as follows. The two putative transcription factors FPSE_09188 and FPSE_09189 could be responsible for orchestrating expression of the W493 A and B biosynthesis cluster genes. W493 A and B consist of six amino acid residues D-allo-thr, L-Ala, D-Ala, L-Gln, D-Tyr, and L-Val/L-Ile linked to a 3-hydroxy-4-methyltetradecanoic acid polyketide chain. The polypeptide is Probable transcription factor FPSE_09189 (Fusarium pseudograminearum (strain CS3096) (Wheat and barley crown-rot fungus)).